Reading from the N-terminus, the 320-residue chain is Mitochondrial thiamine pyrophosphate carrier (320 aa).

Solcar repeat units lie at residues Asn13–Leu106, Arg116–Leu202, and Asn214–Val309. A helical transmembrane segment spans residues Ala19–Ile39. Phosphoserine is present on Ser51. 4 helical membrane-spanning segments follow: residues Ile87 to Val107, Phe122 to Leu142, Val173 to Phe193, and Leu220 to Phe240. A Substrate recognition motif is present at residues Lys241 to Val246. Residues Ala293–Met313 traverse the membrane as a helical segment.

It belongs to the mitochondrial carrier (TC 2.A.29) family. As to expression, expressed in all tissues examined except for placenta. Highest levels in colon, kidney, lung, testis, spleen, and brain.

It is found in the mitochondrion membrane. It carries out the reaction thiamine phosphate(out) + thiamine diphosphate(in) = thiamine phosphate(in) + thiamine diphosphate(out). In terms of biological role, mitochondrial transporter mediating uptake of thiamine diphosphate into mitochondria. It is not clear if the antiporter activity is affected by the membrane potential or by the proton electrochemical gradient. The polypeptide is Mitochondrial thiamine pyrophosphate carrier (Homo sapiens (Human)).